An 82-amino-acid polypeptide reads, in one-letter code: uncharacterized protein (82 aa).

This is an uncharacterized protein from Autographa californica nuclear polyhedrosis virus (AcMNPV).